The following is a 515-amino-acid chain: Ribosome assembly protein 4 (515 aa).

The tract at residues 20-128 (REVAIIPKDL…LLYTPRAVFK (109 aa)) is interaction with MDN1. Residues 29 to 125 (LPNVSIKFQA…QITLLYTPRA (97 aa)) are ubiquitin-like (UBL) domain. 8 WD repeats span residues 141–181 (GHGS…PMHT), 184–223 (GHYN…CLGD), 227–273 (GHSK…CQYT), 276–314 (GHTN…RCIN), 352–396 (AQKK…KPIA), 400–439 (GHQK…FIST), 442–481 (GHVA…LSVD), and 484–515 (GHKD…LWTH).

It belongs to the NLE1/RSA4 family. As to quaternary structure, associates with the pre-60S ribosomal particle. Interacts (via WD repeats) with uL18 (RPL5). Interacts (via UBL domain) with MDN1 (via VWFA/MIDAS domain). Interacts (via WD repeats) with NSA2.

The protein localises to the nucleus. Its subcellular location is the nucleolus. Involved in ribosome biogenesis. Required for processing and efficient intra-nuclear transport of pre-60S ribosomal subunits. Interacts with the AAA-ATPase Midasin (MDN1/REA1), which is essential for the ATP-dependent dissociation of a group of nonribosomal factors from the pre-60S particle. The chain is Ribosome assembly protein 4 from Saccharomyces cerevisiae (strain ATCC 204508 / S288c) (Baker's yeast).